The following is a 124-amino-acid chain: Small ribosomal subunit protein uS12 (124 aa).

Residues 1–32 (MPTIQQLVRKGRQDKVSKNKTPALKGSPQRRG) are disordered. The residue at position 89 (Asp89) is a 3-methylthioaspartic acid.

This sequence belongs to the universal ribosomal protein uS12 family. As to quaternary structure, part of the 30S ribosomal subunit. Contacts proteins S8 and S17. May interact with IF1 in the 30S initiation complex.

With S4 and S5 plays an important role in translational accuracy. In terms of biological role, interacts with and stabilizes bases of the 16S rRNA that are involved in tRNA selection in the A site and with the mRNA backbone. Located at the interface of the 30S and 50S subunits, it traverses the body of the 30S subunit contacting proteins on the other side and probably holding the rRNA structure together. The combined cluster of proteins S8, S12 and S17 appears to hold together the shoulder and platform of the 30S subunit. This chain is Small ribosomal subunit protein uS12, found in Nocardioides sp. (strain ATCC BAA-499 / JS614).